The primary structure comprises 217 residues: Pyrophosphatase PpaX (217 aa).

Aspartate 11 functions as the Nucleophile in the catalytic mechanism.

The protein belongs to the HAD-like hydrolase superfamily. PpaX family. Mg(2+) is required as a cofactor.

It catalyses the reaction diphosphate + H2O = 2 phosphate + H(+). Functionally, hydrolyzes pyrophosphate formed during P-Ser-HPr dephosphorylation by HPrK/P. Might play a role in controlling the intracellular pyrophosphate pool. The chain is Pyrophosphatase PpaX from Listeria monocytogenes serotype 4a (strain HCC23).